Here is a 120-residue protein sequence, read N- to C-terminus: Ribosome-binding factor A (120 aa).

This sequence belongs to the RbfA family. As to quaternary structure, monomer. Binds 30S ribosomal subunits, but not 50S ribosomal subunits or 70S ribosomes.

The protein localises to the cytoplasm. In terms of biological role, one of several proteins that assist in the late maturation steps of the functional core of the 30S ribosomal subunit. Associates with free 30S ribosomal subunits (but not with 30S subunits that are part of 70S ribosomes or polysomes). Required for efficient processing of 16S rRNA. May interact with the 5'-terminal helix region of 16S rRNA. The chain is Ribosome-binding factor A from Clostridium botulinum (strain 657 / Type Ba4).